The following is a 301-amino-acid chain: uncharacterized protein (301 aa).

The Extracellular segment spans residues 1–5; sequence MSYKK. Residues 6 to 26 traverse the membrane as a helical segment; that stretch reads FVYFINLFFLLGATLLTFFLI. The Cytoplasmic segment spans residues 27–112; that stretch reads LAGGRTTGVL…NRNAYYYLSR (86 aa). A helical transmembrane segment spans residues 113-133; the sequence is VGWAMLLIGLFFLLITLVSVI. Over 134–143 the chain is Extracellular; it reads ASLIRYNRRT. The helical transmembrane segment at 144-164 threads the bilayer; that stretch reads AALATAMSWITLFFITLSACL. At 165-191 the chain is on the cytoplasmic side; it reads YTGCYAKAVKAFHHENRDARLGPKNFG. Residues 192 to 212 form a helical membrane-spanning segment; sequence LIWTTVFLLIVNAICCTIMVA. Over 213-301 the chain is Extracellular; the sequence is THKRNEYIYD…YTEQNVPVVS (89 aa). The tract at residues 254–301 is disordered; it reads VQQSQSHQNHRFFKKLRTKKRTVTSAGDEPDRVQEERVYTEQNVPVVS. Residues 261 to 275 are compositionally biased toward basic residues; the sequence is QNHRFFKKLRTKKRT. Residues 282–292 show a composition bias toward basic and acidic residues; the sequence is EPDRVQEERVY.

Belongs to the SUR7 family.

It localises to the cell membrane. Functionally, involved in sporulation and affects the sphingolipid composition of the plasma membrane. This is an uncharacterized protein from Saccharomyces cerevisiae (strain ATCC 204508 / S288c) (Baker's yeast).